The chain runs to 558 residues: MTSLTQNRYFQKLQDWHRDNSADINLRSLFDADPERFNNFSLNLNTTHGHILVDYSKNLVNKEVMQMLVDLARSRGVETMRDNMFSGVKINYTEDRAVLHVALRNRSNSPIVVDSRDVMPEVNRVLEKMRSFCQRVRSGEWKGYSGKPITDIVNIGIGGSDLGPLMVTEALKPYASGGPRIWFVSNIDGTHIAKTLANLTPESSLFIVASKTFTTQETITNAETAKEWFLGASRDPSTVAKHFIALSTNTSKVKEFGIDPQNMFEFWDWVGGRYSLWSAIGLSIALHIGFDNFEQLLSGAHWMDQHFRKTPLEKNAPVLLALLGIWYINFYGCETHALLPYDQYMHRFAAYFQQGDMESNGKSITRSGTRVDHHTGPIVWGEPGTNGQHAFYQLIHQGTKMIPCDFLIPVQTQHPIRKGLHHKILLANFLAQTEALMKGKSNEEAKKELQAAGKSPEDLEKLLPHKVFEGNRPTNSIVFTKLTPFILGALIALYEHKIFVQGVIWDINSFDQWGVELGKQLAKNIEPELDGSAPVTSHDSSTNGLIKFIKQQRDIRIE.

At lysine 12 the chain carries N6-acetyllysine. Phosphoserine is present on residues serine 86 and serine 107. An N6-acetyllysine modification is found at lysine 142. Residue 159–160 coordinates D-glucose 6-phosphate; the sequence is GS. The residue at position 185 (serine 185) is a Phosphoserine; by CK2. 210-215 is a binding site for D-glucose 6-phosphate; the sequence is SKTFTT. Residue threonine 250 is modified to Phosphothreonine. 3 residues coordinate D-glucose 6-phosphate: glutamine 354, glutamate 358, and histidine 389. Glutamate 358 functions as the Proton donor in the catalytic mechanism. Histidine 389 is an active-site residue. Lysine 454 carries the post-translational modification N6-acetyllysine; alternate. Residue lysine 454 is modified to N6-malonyllysine; alternate. N6-succinyllysine; alternate is present on lysine 454. Serine 455 carries the post-translational modification Phosphoserine. Lysine 519 is a binding site for D-glucose 6-phosphate. Residue lysine 519 is part of the active site.

This sequence belongs to the GPI family. In terms of assembly, homodimer; in the catalytically active form. Monomer in the secreted form. In terms of processing, phosphorylation at Ser-185 by CK2 has been shown to decrease enzymatic activity and may contribute to secretion by a non-classical secretory pathway. ISGylated.

It localises to the cytoplasm. The protein localises to the secreted. It catalyses the reaction alpha-D-glucose 6-phosphate = beta-D-fructose 6-phosphate. It participates in carbohydrate degradation; glycolysis; D-glyceraldehyde 3-phosphate and glycerone phosphate from D-glucose: step 2/4. In the cytoplasm, catalyzes the conversion of glucose-6-phosphate to fructose-6-phosphate, the second step in glycolysis, and the reverse reaction during gluconeogenesis. Besides it's role as a glycolytic enzyme, also acts as a secreted cytokine: acts as an angiogenic factor (AMF) that stimulates endothelial cell motility. Acts as a neurotrophic factor, neuroleukin, for spinal and sensory neurons. It is secreted by lectin-stimulated T-cells and induces immunoglobulin secretion. This chain is Glucose-6-phosphate isomerase, found in Cricetulus griseus (Chinese hamster).